The chain runs to 670 residues: DNA ligase (670 aa).

Residues 32 to 36 (DAEYD), 81 to 82 (SL), and Glu113 each bind NAD(+). The active-site N6-AMP-lysine intermediate is the Lys115. Arg136, Glu173, Lys290, and Lys314 together coordinate NAD(+). Positions 408, 411, 426, and 432 each coordinate Zn(2+). One can recognise a BRCT domain in the interval 592 to 670 (EIDSPFAGKT…EAEMIRLLGE (79 aa)).

This sequence belongs to the NAD-dependent DNA ligase family. LigA subfamily. Mg(2+) is required as a cofactor. Mn(2+) serves as cofactor.

The catalysed reaction is NAD(+) + (deoxyribonucleotide)n-3'-hydroxyl + 5'-phospho-(deoxyribonucleotide)m = (deoxyribonucleotide)n+m + AMP + beta-nicotinamide D-nucleotide.. Functionally, DNA ligase that catalyzes the formation of phosphodiester linkages between 5'-phosphoryl and 3'-hydroxyl groups in double-stranded DNA using NAD as a coenzyme and as the energy source for the reaction. It is essential for DNA replication and repair of damaged DNA. This chain is DNA ligase, found in Yersinia pseudotuberculosis serotype IB (strain PB1/+).